The chain runs to 242 residues: Myogenic factor 6 (242 aa).

Residues Ser31–Leu63 are disordered. The bHLH domain maps to Asp93–Leu144.

In terms of assembly, efficient DNA binding requires dimerization with another bHLH protein. Interacts with CSRP3. In terms of tissue distribution, skeletal muscle.

Its subcellular location is the nucleus. Its function is as follows. Involved in muscle differentiation (myogenic factor). Induces fibroblasts to differentiate into myoblasts. Probable sequence specific DNA-binding protein. This Homo sapiens (Human) protein is Myogenic factor 6 (MYF6).